An 817-amino-acid polypeptide reads, in one-letter code: MERFKALEQLLTELDDFLRILDQENLSSTAVVKKSGLAELLRLYTKSSSSDEEYIYMNKVTVHKQQNAESQDKAPEQQNPLTNGEPPQPSSAPQKSLPDLPPPKMIPERKQLSVPKIESPEGYYEEAEPYDTSLNEDGEAVSSSYESYDEEESSKGKSAPHQWPSPEASIELMRDARICAFLWRKKWLGQWAKQLCVIKDTRLLCYKSSKDHSPQLDVSLLGSSVVHKEKQVRKKEHKLKITPLNADVIVLGLQSRDQAEQWLRVIQEVSGLPSEGACEGSQFTPDAQRLSCPKPDITEKYLSASECGSPIDGHPEVPETKDVKKKCSAGLKLSNLMNLGRKKSTSLEPPDRSLETSSYLNVLVNSQWKSRWCSVRDSHLYFYQDRNRSKAAQQPLSLLGCEVVPDPSPDHLYSFRILHNGEELAKLEAKSSEEMGHWLGLLLSESGSKTDPEEFTYDYVDADRVSCIVSAAKTSLLLMQRKFSEPNTYIDGLPSQDRQELLYDDVEVSELTTAGEAPEEATPATDAPGEPDPDRVYLDLTPIKSFLHGDSGARAPSPTPPHQDPPAETLPLPEDSDPAPDEPLIKSPENPELQMQQESQEPEEPSLGGTEVKLQAGQQKTSPSPSCPDTVAVTPAGSSPPVKDRLKAASPEIKLGKNRTEAEVKRYTEEKERLEKKKEEIRGHLAQLRREKRELKETLLKCTDKGAAASLEQKLREVDEECRVEERRRVDLELSIVEVKDSLRKAEAGPVTLGTTVDTTHLESVSPRPKAATPTPAPDCTPVNSATALKNRPLSVMVTGKGTVLQKAKEWEKKGAS.

At tyrosine 56 the chain carries Phosphotyrosine. The tract at residues 63-164 is disordered; that stretch reads HKQQNAESQD…KGKSAPHQWP (102 aa). Acidic residues predominate over residues 123–139; sequence YYEEAEPYDTSLNEDGE. PH domains follow at residues 175–271 and 353–447; these read DARI…EVSG and SLET…SESG. Residue serine 408 is modified to Phosphoserine. Position 413 is a phosphotyrosine (tyrosine 413). Phosphoserine is present on serine 484. The span at 512-528 shows a compositional bias: low complexity; that stretch reads TTAGEAPEEATPATDAP. Disordered regions lie at residues 512–657 and 754–786; these read TTAG…KLGK and GTTVDTTHLESVSPRPKAATPTPAPDCTPVNSA. A coiled-coil region spans residues 652–748; it reads EIKLGKNRTE…VKDSLRKAEA (97 aa). The span at 754–763 shows a compositional bias: polar residues; it reads GTTVDTTHLE. Low complexity predominate over residues 767–782; it reads PRPKAATPTPAPDCTP.

Interacts with SRC. Interacts with LCK when tyrosine phosphorylated. Post-translationally, tyrosine phosphorylated (by SRC).

The protein localises to the cytoplasm. Functionally, may play a role in a signaling cascade by enhancing the kinase activity of SRC. Contributes to SRC-regulated transcription activation. The polypeptide is Actin filament-associated protein 1-like 2 (AFAP1L2) (Bos taurus (Bovine)).